A 138-amino-acid chain; its full sequence is Large ribosomal subunit protein uL16 (138 aa).

The segment covering 1-16 has biased composition (basic residues); that stretch reads MLIPKRVKYRRQHRPT. The disordered stretch occupies residues 1–23; sequence MLIPKRVKYRRQHRPTRSGVSKG.

The protein belongs to the universal ribosomal protein uL16 family. In terms of assembly, part of the 50S ribosomal subunit.

Binds 23S rRNA and is also seen to make contacts with the A and possibly P site tRNAs. The sequence is that of Large ribosomal subunit protein uL16 from Corynebacterium aurimucosum (strain ATCC 700975 / DSM 44827 / CIP 107346 / CN-1) (Corynebacterium nigricans).